The chain runs to 362 residues: 3-dehydroquinate synthase (362 aa).

NAD(+)-binding positions include aspartate 71–lysine 76, glycine 105–aspartate 109, threonine 129–threonine 130, lysine 142, and lysine 151. Glutamate 184, histidine 247, and histidine 264 together coordinate Zn(2+).

Belongs to the sugar phosphate cyclases superfamily. Dehydroquinate synthase family. It depends on NAD(+) as a cofactor. The cofactor is Co(2+). Zn(2+) serves as cofactor.

It localises to the cytoplasm. The enzyme catalyses 7-phospho-2-dehydro-3-deoxy-D-arabino-heptonate = 3-dehydroquinate + phosphate. The protein operates within metabolic intermediate biosynthesis; chorismate biosynthesis; chorismate from D-erythrose 4-phosphate and phosphoenolpyruvate: step 2/7. In terms of biological role, catalyzes the conversion of 3-deoxy-D-arabino-heptulosonate 7-phosphate (DAHP) to dehydroquinate (DHQ). In Haemophilus ducreyi (strain 35000HP / ATCC 700724), this protein is 3-dehydroquinate synthase.